The primary structure comprises 494 residues: Probable cytochrome P450 515A1 (494 aa).

A helical membrane pass occupies residues 1–21 (MILGIILGLFIYIYLINIKFF). Cysteine 440 contacts heme.

Belongs to the cytochrome P450 family. Requires heme as cofactor.

It is found in the membrane. In Dictyostelium discoideum (Social amoeba), this protein is Probable cytochrome P450 515A1 (cyp515A1).